The sequence spans 449 residues: Wilms tumor protein homolog (449 aa).

The disordered stretch occupies residues 48 to 84 (YGSLGGPAPPPAPPPPPPPPPHSFIKQEPSWGGAEPH). Residues 54–69 (PAPPPAPPPPPPPPPH) are compositionally biased toward pro residues. Glycyl lysine isopeptide (Lys-Gly) (interchain with G-Cter in SUMO) cross-links involve residues Lys-73 and Lys-177. Residues 236–244 (MTWNQMNLG) carry the 9aaTAD motif. 3 consecutive C2H2-type zinc fingers follow at residues 323-347 (FMCAYPGCNKRYFKLSHLQMHSRKH), 353-377 (YQCDFKDCERRFSRSDQLKRHQRRH), and 383-405 (FQCKTCQRKFSRSDHLKTHTRTH). Important for interaction with target DNA stretches follow at residues 367–381 (SDQLKRHQRRHTGVK) and 393–401 (SRSDHLKTH). The KTS motif motif lies at 408–410 (KTS). The segment at 414–438 (FSCRWPSCQKKFARSDELVRHHNMH) adopts a C2H2-type 4 zinc-finger fold. A Glycyl lysine isopeptide (Lys-Gly) (interchain with G-Cter in SUMO2) cross-link involves residue Lys-444.

The protein belongs to the EGR C2H2-type zinc-finger protein family. In terms of assembly, interacts with ZNF224 via the zinc-finger region. Interacts with WTAP, AMER1 and SRY. Homodimer. Interacts with WTIP. Interacts with actively translating polysomes. Detected in nuclear ribonucleoprotein (mRNP) particles. Interacts with U2AF2. Interacts with HNRNPU via the zinc-finger region. Interacts with CITED2. Interacts with RBM4.

It is found in the nucleus speckle. It localises to the nucleus. The protein localises to the nucleoplasm. Its subcellular location is the nucleolus. The protein resides in the cytoplasm. Functionally, transcription factor that plays an important role in cellular development and cell survival. Recognizes and binds to the DNA sequence 5'-GCG(T/G)GGGCG-3'. Regulates the expression of numerous target genes, including EPO. Plays an essential role for development of the urogenital system. It has a tumor suppressor as well as an oncogenic role in tumor formation. Function may be isoform-specific: isoforms lacking the KTS motif may act as transcription factors. Isoforms containing the KTS motif may bind mRNA and play a role in mRNA metabolism or splicing. Isoform 1 has lower affinity for DNA, and can bind RNA. This Sus scrofa (Pig) protein is Wilms tumor protein homolog (WT1).